The following is a 378-amino-acid chain: Dihydroorotate dehydrogenase (quinone) (378 aa).

FMN is bound by residues 77 to 81 (AGFDK) and threonine 101. Position 81 (lysine 81) interacts with substrate. 126 to 130 (NRMGF) serves as a coordination point for substrate. Asparagine 158 and asparagine 191 together coordinate FMN. Asparagine 191 contributes to the substrate binding site. Serine 194 acts as the Nucleophile in catalysis. Substrate is bound at residue asparagine 196. Positions 229 and 257 each coordinate FMN. 258 to 259 (NT) serves as a coordination point for substrate. Residues glycine 287, glycine 316, and 337–338 (YT) each bind FMN.

Belongs to the dihydroorotate dehydrogenase family. Type 2 subfamily. Monomer. FMN serves as cofactor.

The protein resides in the cell membrane. The catalysed reaction is (S)-dihydroorotate + a quinone = orotate + a quinol. It participates in pyrimidine metabolism; UMP biosynthesis via de novo pathway; orotate from (S)-dihydroorotate (quinone route): step 1/1. In terms of biological role, catalyzes the conversion of dihydroorotate to orotate with quinone as electron acceptor. The chain is Dihydroorotate dehydrogenase (quinone) from Synechococcus elongatus (strain ATCC 33912 / PCC 7942 / FACHB-805) (Anacystis nidulans R2).